The sequence spans 336 residues: Ornithine carbamoyltransferase, catabolic (336 aa).

Carbamoyl phosphate-binding positions include 57-60, Gln-84, Arg-108, and 135-138; these read STRT and HPTQ. Residues Asn-169, Asp-233, and 237–238 contribute to the L-ornithine site; that span reads SM. Residues 275-276 and Arg-322 contribute to the carbamoyl phosphate site; that span reads CL.

This sequence belongs to the aspartate/ornithine carbamoyltransferase superfamily. OTCase family.

The protein localises to the cytoplasm. It carries out the reaction carbamoyl phosphate + L-ornithine = L-citrulline + phosphate + H(+). Its pathway is amino-acid degradation; L-arginine degradation via ADI pathway; carbamoyl phosphate from L-arginine: step 2/2. Reversibly catalyzes the transfer of the carbamoyl group from carbamoyl phosphate (CP) to the N(epsilon) atom of ornithine (ORN) to produce L-citrulline. In Photobacterium profundum (strain SS9), this protein is Ornithine carbamoyltransferase, catabolic.